The sequence spans 322 residues: MPASLPRLALIHTGGTIASRPSPDGRGLTPQTPPALPGLEGVQVSEHQPFNLPSPHVTPAHMQQLAHLIEQLAGGHDAVVVTHGTDTLEETAFFLHLCLPAGLPVVLTGSMRHAEEVSWDGPGNLLDAAQVALCPQTAGRGPLVVFGGDIFDARTVTKVHTSAVDAFGGYPGPIGRIDRTAAGPQVHYFARPEPRPTFRPVTLERRVEILYAYAGWQGEGYAGALERADGLVIAALGTGNLPPELLPLIAATDKPVVLATRTHAGPILPVYGYAGGGATLVEAGAIPASFLNAHKARLLLLVLLNLGASREDIRRVFTQGVF.

Residues 6–320 (PRLALIHTGG…EDIRRVFTQG (315 aa)) form the Asparaginase/glutaminase domain. The segment at 13-37 (TGGTIASRPSPDGRGLTPQTPPALP) is disordered. The O-isoaspartyl threonine intermediate role is filled by T16. Substrate is bound by residues S54 and 85 to 86 (TD).

It belongs to the asparaginase 1 family.

The protein localises to the cytoplasm. It catalyses the reaction L-asparagine + H2O = L-aspartate + NH4(+). This is Probable L-asparaginase (ansA) from Deinococcus radiodurans (strain ATCC 13939 / DSM 20539 / JCM 16871 / CCUG 27074 / LMG 4051 / NBRC 15346 / NCIMB 9279 / VKM B-1422 / R1).